A 378-amino-acid polypeptide reads, in one-letter code: Putative zinc finger protein 302L (378 aa).

A C2H2-type; degenerate zinc finger spans residues 3–25; that stretch reads IVCEFCDKSFDSKSKVNAHQRTK.

The protein belongs to the IIV-6 302L family.

The polypeptide is Putative zinc finger protein 302L (Invertebrate iridescent virus 6 (IIV-6)).